Consider the following 224-residue polypeptide: Claudin-17 (224 aa).

Over 1-7 the chain is Cytoplasmic; sequence MAFYPLQ. A helical transmembrane segment spans residues 8-28; it reads IAGLVLGFFGLVGTIGTTLLP. The Extracellular segment spans residues 29-81; the sequence is QWRVSAFIGSNIIIFERIWEGLWMNCIQQAMVTLQCKFYNSILALPPVLEAAR. Residues 82-102 traverse the membrane as a helical segment; it reads ALMCVAVALALVALIIGICGM. Topologically, residues 103–124 are cytoplasmic; it reads KQLQCTGSSERVKAYLLGTSGV. Residues 125-145 form a helical membrane-spanning segment; it reads LFILTGIFVLIPVSWTANIII. The Extracellular portion of the chain corresponds to 146-164; it reads RDFYDPTVHAGQKRELGGA. The chain crosses the membrane as a helical span at residues 165-185; sequence LFLGWATAAVLFIGGGLLCGY. Over 186-224 the chain is Cytoplasmic; sequence CCCNRKERWHRYPVPAYRVPQKDNQRNVTVPRKSSTSYV.

This sequence belongs to the claudin family. As to quaternary structure, does not form homotypic polymeric strands and it is not sufficient to form tight junctions by its own. Interacts with OCLN. As to expression, expressed at high levels in the kidney and at mucher lower levels in the brain. In the kidney, expression gradually decreases from the proximal tubule downstream to the distal convoluted tubule. Expressed in the thin ascending limb of Henle's loop, as well as in the thick ascending limb of Henle's loop. In the distal convoluted tubules, expressed only in a few tubules. Not detected in the collecting duct. In the brain, expressed in blood vessels (at protein level).

It localises to the cell junction. It is found in the tight junction. Its subcellular location is the cell membrane. The catalysed reaction is chloride(in) = chloride(out). It carries out the reaction hydrogencarbonate(in) = hydrogencarbonate(out). The enzyme catalyses bromide(in) = bromide(out). It catalyses the reaction iodide(out) = iodide(in). The catalysed reaction is fluoride(in) = fluoride(out). It carries out the reaction nitrate(in) = nitrate(out). The enzyme catalyses thiocyanate(in) = thiocyanate(out). Functionally, channel-forming tight junction protein with selectivity for anions, including chloride and hydrogencarbonate, and for solutes smaller than 9 Angstrom in diameter. In the kidney proximal tubule, may be involved in quantitative reabsorption of filtered anions. Does not affect water permeability. This chain is Claudin-17 (Cldn17), found in Mus musculus (Mouse).